The primary structure comprises 73 residues: Eukaryotic translation initiation factor 4 gamma 2 (73 aa).

Residues 1–70 enclose the W2 domain; the sequence is QVHCYNSNFP…ETAEEEESEE (70 aa).

The protein belongs to the eukaryotic initiation factor 4G family. Interacts with the serine/threonine protein kinases MKNK1 and MKNK2. Binds EIF4A and EIF3. Phosphorylation; hyperphosphorylated during mitosis.

Functionally, appears to play a role in the switch from cap-dependent to IRES-mediated translation during mitosis, apoptosis and viral infection. Cleaved by some caspases and viral proteases. The sequence is that of Eukaryotic translation initiation factor 4 gamma 2 (EIF4G2) from Gallus gallus (Chicken).